A 513-amino-acid polypeptide reads, in one-letter code: Interferon alpha/beta receptor 2 (513 aa).

The first 21 residues, 1 to 21 (MRSRCTVSAVGLLSLCLVVSA), serve as a signal peptide directing secretion. Topologically, residues 22–242 (SLETITPSAF…GQESGLSESA (221 aa)) are extracellular. Intrachain disulfides connect C39–C123 and C85–C93. 5 N-linked (GlcNAc...) asparagine glycosylation sites follow: N42, N58, N65, N78, and N84. Residues N149, N191, and N195 are each glycosylated (N-linked (GlcNAc...) asparagine). A disulfide bridge links C210 with C227. The chain crosses the membrane as a helical span at residues 243–263 (IVGITTSCLVVMVFVSTIVML). At 264–513 (KRIGYICLKD…ADVGDGYIMR (250 aa)) the chain is on the cytoplasmic side. Residues 334–402 (GYTMHGLTGK…DPTGPYERRK (69 aa)) form a disordered region. Phosphotyrosine is present on Y335. Polar residues predominate over residues 344-354 (PLQQTSDTSAS). Low complexity predominate over residues 377 to 389 (GAEPELPTEAGAG). S403 is subject to Phosphoserine. The mediates interaction with STAT2 (and required for the recruitment of USP18) stretch occupies residues 421–444 (GDNIIFNVNLNSVFLRVLHDEDAS). Phosphoserine occurs at positions 448 and 465. Positions 458 to 513 (EGPQRTESDLRIAGGDRTQPPLPSLPSQDLWTEDGSSEKSDTSDSDADVGDGYIMR) are disordered. Y510 carries the phosphotyrosine modification.

It belongs to the type II cytokine receptor family. In terms of assembly, heterodimer with IFNAR1; forming the receptor for type I interferon. Interacts with the transcriptional factors STAT1 and STAT2. Interacts with JAK1. Interacts with USP18; indirectly via STAT2, it negatively regulates the assembly of the ternary interferon-IFNAR1-IFNAR2 complex and therefore type I interferon signaling. In terms of processing, phosphorylated on tyrosine residues upon interferon binding. Phosphorylation at Tyr-335 or Tyr-510 are sufficient to mediate interferon dependent activation of STAT1, STAT2 and STAT3 leading to antiproliferative effects on many different cell types. As to expression, widely expressed. Detected in liver, testis, kidney, salivary gland, thymus, brain, lung and placenta. Isoform 1, isoform 2 and isoform 3 are expressed in brain.

Its subcellular location is the cell membrane. The protein resides in the secreted. In terms of biological role, together with IFNAR1, forms the heterodimeric receptor for type I interferons (including interferons alpha, beta, epsilon, omega and kappa). Type I interferon binding activates the JAK-STAT signaling cascade, resulting in transcriptional activation or repression of interferon-regulated genes that encode the effectors of the interferon response. Mechanistically, type I interferon-binding brings the IFNAR1 and IFNAR2 subunits into close proximity with one another, driving their associated Janus kinases (JAKs) (TYK2 bound to IFNAR1 and JAK1 bound to IFNAR2) to cross-phosphorylate one another. The activated kinases phosphorylate specific tyrosine residues on the intracellular domains of IFNAR1 and IFNAR2, forming docking sites for the STAT transcription factors (STAT1, STAT2 and STAT). STAT proteins are then phosphorylated by the JAKs, promoting their translocation into the nucleus to regulate expression of interferon-regulated genes. Its function is as follows. May be potent inhibitors of type I IFN receptor activity. This Mus musculus (Mouse) protein is Interferon alpha/beta receptor 2 (Ifnar2).